A 633-amino-acid polypeptide reads, in one-letter code: Telomere-binding protein 1 (633 aa).

The interval 253 to 272 is disordered; that stretch reads HAADRDDDENSSGCVHPSTS. Polar residues predominate over residues 263–272; sequence SSGCVHPSTS. The region spanning 351–430 is the Ubiquitin-like domain; the sequence is VKLTIKSFNI…LNDIGFTLEC (80 aa). The segment at 506 to 615 is sufficient for telomeric DNA binding; sequence PFADPNSLAL…RVLAAQAYWS (110 aa). An HTH myb-type domain is found at 529–588; the sequence is GQRRIRRPFTVAEVELLVEAVEHLGTGRWRDVKFRAFENVHHRTYVDLKDKWKTLVHTAS. An SANT domain is found at 534-584; the sequence is RRPFTVAEVELLVEAVEHLGTGRWRDVKFRAFENVHHRTYVDLKDKWKTLV. Residues 557–584 constitute a DNA-binding region (H-T-H motif); sequence WRDVKFRAFENVHHRTYVDLKDKWKTLV.

As to quaternary structure, homodimer. In terms of tissue distribution, ubiquitous.

Its subcellular location is the chromosome. The protein resides in the telomere. In terms of biological role, binds the telomeric double-stranded 5'TTTAGGG-3' repeat and regulates telomere length and structure. This chain is Telomere-binding protein 1 (TBP1), found in Oryza sativa subsp. japonica (Rice).